We begin with the raw amino-acid sequence, 310 residues long: tRNA dimethylallyltransferase (310 aa).

10–17 (GPTAVGKS) lines the ATP pocket. Substrate is bound at residue 12–17 (TAVGKS). Residues 35–38 (DSMQ) form an interaction with substrate tRNA region.

The protein belongs to the IPP transferase family. Monomer. The cofactor is Mg(2+).

It carries out the reaction adenosine(37) in tRNA + dimethylallyl diphosphate = N(6)-dimethylallyladenosine(37) in tRNA + diphosphate. Its function is as follows. Catalyzes the transfer of a dimethylallyl group onto the adenine at position 37 in tRNAs that read codons beginning with uridine, leading to the formation of N6-(dimethylallyl)adenosine (i(6)A). This is tRNA dimethylallyltransferase from Clostridium perfringens (strain SM101 / Type A).